We begin with the raw amino-acid sequence, 356 residues long: UDP-N-acetylglucosamine--N-acetylmuramyl-(pentapeptide) pyrophosphoryl-undecaprenol N-acetylglucosamine transferase (356 aa).

The UDP-N-acetyl-alpha-D-glucosamine site is built by serine 195 and glutamine 287.

Belongs to the glycosyltransferase 28 family. MurG subfamily.

The protein localises to the cell membrane. It carries out the reaction Mur2Ac(oyl-L-Ala-gamma-D-Glu-L-Lys-D-Ala-D-Ala)-di-trans,octa-cis-undecaprenyl diphosphate + UDP-N-acetyl-alpha-D-glucosamine = beta-D-GlcNAc-(1-&gt;4)-Mur2Ac(oyl-L-Ala-gamma-D-Glu-L-Lys-D-Ala-D-Ala)-di-trans,octa-cis-undecaprenyl diphosphate + UDP + H(+). Its pathway is cell wall biogenesis; peptidoglycan biosynthesis. Its function is as follows. Cell wall formation. Catalyzes the transfer of a GlcNAc subunit on undecaprenyl-pyrophosphoryl-MurNAc-pentapeptide (lipid intermediate I) to form undecaprenyl-pyrophosphoryl-MurNAc-(pentapeptide)GlcNAc (lipid intermediate II). This Streptococcus gordonii (strain Challis / ATCC 35105 / BCRC 15272 / CH1 / DL1 / V288) protein is UDP-N-acetylglucosamine--N-acetylmuramyl-(pentapeptide) pyrophosphoryl-undecaprenol N-acetylglucosamine transferase.